The sequence spans 648 residues: Centrosomal protein of 63 kDa-B (648 aa).

Coiled coils occupy residues 19–188 and 222–555; these read DSCE…QSHN and EEEL…DAAS. S559 carries the phosphoserine; by atm and atr modification. Residues 611 to 644 adopt a coiled-coil conformation; the sequence is FLQEEEQRSHELLQRLNAHIEELKQESQRTVEHF.

Belongs to the CEP63 family. Phosphorylation at Ser-559 by atm and atr promotes its delocalization from the centrosome and impairs its ability to promote centrosome dependent spindle assembly.

It is found in the cytoplasm. It localises to the cytoskeleton. The protein localises to the microtubule organizing center. The protein resides in the centrosome. Its subcellular location is the centriole. Its function is as follows. Required for normal spindle assembly. Plays a key role in mother-centriole-dependent centriole duplication. Plays a role in DNA damage response. Following DNA damage, such as double-strand breaks (DSBs), is removed from centrosomes; this leads to the inactivation of spindle assembly and delay in mitotic progression. The chain is Centrosomal protein of 63 kDa-B (cep63-b) from Xenopus laevis (African clawed frog).